A 440-amino-acid polypeptide reads, in one-letter code: Enolase (440 aa).

Q163 lines the (2R)-2-phosphoglycerate pocket. The Proton donor role is filled by E205. D242, E288, and D315 together coordinate Mg(2+). The (2R)-2-phosphoglycerate site is built by K340, R369, S370, and K391. Residue K340 is the Proton acceptor of the active site.

Belongs to the enolase family. Mg(2+) is required as a cofactor.

It is found in the cytoplasm. The protein resides in the secreted. The protein localises to the cell surface. It carries out the reaction (2R)-2-phosphoglycerate = phosphoenolpyruvate + H2O. Its pathway is carbohydrate degradation; glycolysis; pyruvate from D-glyceraldehyde 3-phosphate: step 4/5. Functionally, catalyzes the reversible conversion of 2-phosphoglycerate (2-PG) into phosphoenolpyruvate (PEP). It is essential for the degradation of carbohydrates via glycolysis. The protein is Enolase of Limosilactobacillus fermentum (strain NBRC 3956 / LMG 18251) (Lactobacillus fermentum).